The primary structure comprises 358 residues: Protein FAM187B (358 aa).

Residues Met1 to Ala17 form the signal peptide. The Extracellular portion of the chain corresponds to Gln18–Leu322. N-linked (GlcNAc...) asparagine glycosylation occurs at Asn127. Residues Lys323–Phe343 form a helical membrane-spanning segment. At Arg344–Lys358 the chain is on the cytoplasmic side.

The protein belongs to the FAM187 family.

It is found in the membrane. The sequence is that of Protein FAM187B (Fam187b) from Mus musculus (Mouse).